A 592-amino-acid chain; its full sequence is Endoribonuclease Arlr (592 aa).

An N-terminal signal peptide occupies residues 1 to 24; that stretch reads MRCLALSAVFLCLTLAGHFHLSDA. The disordered stretch occupies residues 83 to 329; that stretch reads PTAANKPPPL…FQSSGNSVAT (247 aa). Polar residues predominate over residues 109 to 120; the sequence is PGSSPFGASQNP. 2 stretches are compositionally biased toward low complexity: residues 134 to 144 and 188 to 209; these read PSHPSQPSQPS and GISS…TGKT. Composition is skewed to pro residues over residues 234-249 and 258-267; these read LPAP…PTPG and LPTPQHPVHP. The span at 268 to 294 shows a compositional bias: low complexity; it reads PTKATSAATPTPTPTPSFSSSVTPTPA. Positions 329-592 constitute an EndoU domain; it reads TDDEIRQLTE…NLIGSAYPEI (264 aa). Active-site residues include H473, H488, and K531.

The protein belongs to the ENDOU family. In terms of assembly, monomer. The cofactor is Mn(2+). In terms of tissue distribution, predominantly expressed in head. Expressed in fat body cells.

Its subcellular location is the endoplasmic reticulum lumen. The protein resides in the secreted. The enzyme catalyses a ribonucleotidyl-ribonucleotide-RNA + H2O = a 3'-end 3'-phospho-ribonucleotide-RNA + a 5'-end dephospho-ribonucleoside-RNA + H(+). Endoribonuclease that cleaves single-stranded RNAs; unlike its paralog EndoU it does not appear to preferentially cleave at uridylates and releases linear products instead of products that have 2'-3'-cyclic phosphate termini. Preferentially cleaves single stranded RNA at sites with AU, UC and poly-U sites cleaved less efficiently. Targets mRNAs encoding proteins involved in lipid metabolism, particularly those involved in lipolysis, to regulate their expression. The polypeptide is Endoribonuclease Arlr (Drosophila melanogaster (Fruit fly)).